A 430-amino-acid chain; its full sequence is MKRMKLRTNAGPLQGTIQVPGDKSISHRAVILGAVAKGETRVKGLLKGEDVLSTIQAFRNLGVRIEEKDDQLVIEGQGFQGLNAPCQTLNMGNSGTSMRLIAGLLAGQPFSVKMIGDESLSKRPMDRIVYPLKQMGVEISGETDRQFPPLQLQGNRNLQPITYTLPISSAQVKSAILLAALQAKGTTQVVEKEITRNHTEEMIQQFGGRLIVDGKRITLVGPQQLTAQEITVPGDISSAAFWLVAGLIIPGSELLLKNVGVNPTRTGILEVVEKMGAQIAYEDMNKKEQVTSIRVVYSHLKGTIISGGLIPRLIDELPIIALLATQAQGTTCIKDAQELRVKETDRIQVVTDILNSMGANIKATADGMIIKGPTVLYGANTSTYGDHRIGMMTAIAALLVKQGQVHLDKEEAIMTSYPTFFKDLERLCHD.

Residues lysine 23, serine 24, and arginine 28 each contribute to the 3-phosphoshikimate site. A phosphoenolpyruvate-binding site is contributed by lysine 23. Phosphoenolpyruvate is bound by residues glycine 95 and arginine 123. The 3-phosphoshikimate site is built by serine 169, glutamine 171, aspartate 315, and lysine 342. Glutamine 171 is a phosphoenolpyruvate binding site. Aspartate 315 (proton acceptor) is an active-site residue. 2 residues coordinate phosphoenolpyruvate: arginine 346 and arginine 388.

It belongs to the EPSP synthase family. In terms of assembly, monomer.

It is found in the cytoplasm. The enzyme catalyses 3-phosphoshikimate + phosphoenolpyruvate = 5-O-(1-carboxyvinyl)-3-phosphoshikimate + phosphate. It functions in the pathway metabolic intermediate biosynthesis; chorismate biosynthesis; chorismate from D-erythrose 4-phosphate and phosphoenolpyruvate: step 6/7. Functionally, catalyzes the transfer of the enolpyruvyl moiety of phosphoenolpyruvate (PEP) to the 5-hydroxyl of shikimate-3-phosphate (S3P) to produce enolpyruvyl shikimate-3-phosphate and inorganic phosphate. This is 3-phosphoshikimate 1-carboxyvinyltransferase from Streptococcus pyogenes serotype M2 (strain MGAS10270).